An 804-amino-acid chain; its full sequence is Leucine--tRNA ligase (804 aa).

The short motif at 40-51 (PYPSGAGLHVGH) is the 'HIGH' region element. A 'KMSKS' region motif is present at residues 574–578 (KMSKS). Residue K577 participates in ATP binding.

This sequence belongs to the class-I aminoacyl-tRNA synthetase family.

Its subcellular location is the cytoplasm. It carries out the reaction tRNA(Leu) + L-leucine + ATP = L-leucyl-tRNA(Leu) + AMP + diphosphate. This is Leucine--tRNA ligase from Shouchella clausii (strain KSM-K16) (Alkalihalobacillus clausii).